The primary structure comprises 198 residues: Na(+)-translocating NADH-quinone reductase subunit E (198 aa).

Helical transmembrane passes span 11 to 31, 35 to 55, 77 to 97, 110 to 130, 140 to 160, and 176 to 196; these read AVFV…FLAV, VSTA…AVPI, FLNF…LEMI, GIFL…SFMV, IVYG…MAGI, and LGIT…FSGV.

The protein belongs to the NqrDE/RnfAE family. As to quaternary structure, composed of six subunits; NqrA, NqrB, NqrC, NqrD, NqrE and NqrF.

The protein localises to the cell inner membrane. It carries out the reaction a ubiquinone + n Na(+)(in) + NADH + H(+) = a ubiquinol + n Na(+)(out) + NAD(+). Functionally, NQR complex catalyzes the reduction of ubiquinone-1 to ubiquinol by two successive reactions, coupled with the transport of Na(+) ions from the cytoplasm to the periplasm. NqrA to NqrE are probably involved in the second step, the conversion of ubisemiquinone to ubiquinol. This is Na(+)-translocating NADH-quinone reductase subunit E from Klebsiella pneumoniae subsp. pneumoniae (strain ATCC 700721 / MGH 78578).